The primary structure comprises 1633 residues: Serine-aspartate repeat-containing protein F (1633 aa).

The signal sequence occupies residues M1–A45. The segment at A46 to P678 is ligand binding A region. A disordered region spans residues K51–D269. Residues A61–S74 show a composition bias toward basic and acidic residues. Polar residues-rich tracts occupy residues G85–T99 and P146–N168. Residues K175–T184 are compositionally biased toward basic and acidic residues. The segment covering Q186–Q226 has biased composition (polar residues). Basic and acidic residues predominate over residues L227 to T253. The segment covering K255–S266 has biased composition (polar residues). 4 CNA-B domains span residues T679–P797, K798–P907, I908–P1018, and K1019–D1129. Residues T679–D1129 form a type I collagen binding region region. The segment at F862 to T889 is disordered. The disordered stretch occupies residues K1085–T1608. Positions E1107–F1119 are enriched in basic and acidic residues. The segment covering Y1125–S1584 has biased composition (acidic residues). A compositionally biased stretch (basic and acidic residues) spans D1585–K1606. The short motif at L1594 to G1598 is the LPXTG sorting signal element. At T1597 the chain carries Pentaglycyl murein peptidoglycan amidated threonine. Positions G1598 to K1633 are cleaved as a propeptide — removed by sortase.

Belongs to the serine-aspartate repeat-containing protein (SDr) family.

It is found in the secreted. The protein resides in the cell wall. Binds to type I collagen via alpha-2(I) or alpha-1(I) chains. In Staphylococcus epidermidis (strain ATCC 12228 / FDA PCI 1200), this protein is Serine-aspartate repeat-containing protein F (sdrF).